A 100-amino-acid chain; its full sequence is Putative ESAT-6-like protein Y (100 aa).

It belongs to the WXG100 family.

This chain is Putative ESAT-6-like protein Y, found in Mycobacterium leprae (strain TN).